The sequence spans 127 residues: Large ribosomal subunit protein eL32 (127 aa).

Positions 38-48 (WRRPKGIDSKM) are enriched in basic and acidic residues. Residues 38–66 (WRRPKGIDSKMRLKKKGKPRSPSIGWSSP) form a disordered region.

Belongs to the eukaryotic ribosomal protein eL32 family.

This Thermococcus gammatolerans (strain DSM 15229 / JCM 11827 / EJ3) protein is Large ribosomal subunit protein eL32.